We begin with the raw amino-acid sequence, 224 residues long: Perchlorate reductase assembly chaperone protein (224 aa).

It belongs to the type II DMSO reductase enzyme chaperone family.

The protein resides in the cytoplasm. Its function is as follows. May function as a system-specific molybdenum chaperone protein essential for the assembly of the perchlorate reductase PcrAB complex prior to its periplasmic translocation via the Tat pathway. This Dechloromonas aromatica (strain RCB) protein is Perchlorate reductase assembly chaperone protein (pcrD).